The following is a 459-amino-acid chain: FBD-associated F-box protein At1g61320 (459 aa).

A disordered region spans residues 1-25 (MAPPTKRTRVEMAESSNKRMKPSET). The F-box domain maps to 21–69 (KPSETVPEDVLELMMSTYLPVQSLLTTRVLSKRFRETEVRSLDLDFSGI). The 33-residue stretch at 396–428 (VKIIGYKGHWHELDIVEFFVKNAPSLKRLELQM) folds into the FBD domain.

This chain is FBD-associated F-box protein At1g61320, found in Arabidopsis thaliana (Mouse-ear cress).